A 450-amino-acid chain; its full sequence is Phosphoglucosamine mutase (450 aa).

Ser-102 (phosphoserine intermediate) is an active-site residue. The Mg(2+) site is built by Ser-102, Asp-243, Asp-245, and Asp-247. Ser-102 carries the post-translational modification Phosphoserine.

This sequence belongs to the phosphohexose mutase family. Requires Mg(2+) as cofactor. Post-translationally, activated by phosphorylation.

The catalysed reaction is alpha-D-glucosamine 1-phosphate = D-glucosamine 6-phosphate. Functionally, catalyzes the conversion of glucosamine-6-phosphate to glucosamine-1-phosphate. This Mesorhizobium japonicum (strain LMG 29417 / CECT 9101 / MAFF 303099) (Mesorhizobium loti (strain MAFF 303099)) protein is Phosphoglucosamine mutase.